A 257-amino-acid polypeptide reads, in one-letter code: Glutamate racemase (257 aa).

Substrate-binding positions include 12 to 13 (DS) and 44 to 45 (YG). The active-site Proton donor/acceptor is Cys-75. A substrate-binding site is contributed by 76–77 (NT). Residue Cys-185 is the Proton donor/acceptor of the active site. Residue 186–187 (TH) coordinates substrate.

The protein belongs to the aspartate/glutamate racemases family.

The catalysed reaction is L-glutamate = D-glutamate. It functions in the pathway cell wall biogenesis; peptidoglycan biosynthesis. In terms of biological role, provides the (R)-glutamate required for cell wall biosynthesis. The sequence is that of Glutamate racemase from Clostridium botulinum (strain Kyoto / Type A2).